A 478-amino-acid polypeptide reads, in one-letter code: Odorant receptor coreceptor (478 aa).

The Cytoplasmic segment spans residues 1 to 43; that stretch reads MNVQPTKYHGLVLDLMPNIRLMQGFGHFLFRYVNGPVLIRKLY. Residues 44 to 64 form a helical membrane-spanning segment; the sequence is SWWNLIMILLQYFAIMGNLVM. Residues 65 to 73 are Extracellular-facing; it reads NTGDVNELT. The chain crosses the membrane as a helical span at residues 74-94; the sequence is ANTITTLFFTHSVTKFIYVAV. The Cytoplasmic segment spans residues 95 to 133; the sequence is NSEHFYRTLGIWNQPNSHSLFAESDARYHSIALAKMRKL. A helical transmembrane segment spans residues 134-154; the sequence is LVMVMVTTVLSVVAWITITFF. Residues 155 to 187 lie on the Extracellular side of the membrane; it reads GDSVKNVFDKETNETYTVEIPRLPIKAWYPWDA. Residue Asn-167 is glycosylated (N-linked (GlcNAc...) asparagine). Residues 188–208 form a helical membrane-spanning segment; the sequence is MSGVPYFFSFIYQAYFLLFSM. The Cytoplasmic portion of the chain corresponds to 209–343; sequence CQANLADVMF…VERHKHVVRL (135 aa). Residues 344–364 form a helical membrane-spanning segment; it reads VSAIGETYGAALLLHMLTSTI. At 365–382 the chain is on the extracellular side; it reads KLTLLAYQATKIDALNVY. A helical transmembrane segment spans residues 383–403; the sequence is GLTVIGYLVYALAQVFLFCIF. Topologically, residues 404 to 454 are cytoplasmic; it reads GNRLIEESSSVMEAAYSCHWYDGSEEAKTFVQIVCQQCQKAMTISGAKFFT. Residues 455–475 form a helical membrane-spanning segment; it reads VSLDLFASVLGAVVTYFMVLV. At 476–478 the chain is on the extracellular side; sequence QLK.

It belongs to the insect chemoreceptor superfamily. Heteromeric odorant receptor channel (TC 1.A.69) family. Orco subfamily. As to quaternary structure, heterodimer with conventional odorant receptors (ORs). Complexes exist early in the endomembrane system in olfactory sensory neurons (OSNs), coupling these complexes to the conserved ciliary trafficking pathway. As to expression, found specifically within most antennal and maxillary palp sensilla, as well as in a subset of proboscis sensilla.

It localises to the cell membrane. Odorant coreceptor which complexes with conventional odorant receptors (ORs) to form odorant-sensing units, providing sensitive and prolonged odorant signaling and calcium permeability. Orco is a universal and integral part of the functional odorant receptor, involved in the dendritic localization of other olfactory receptors. Plays a key role in preferred attraction of females for humans over non-human hosts for blood feeding. Human attraction plays a crucial role in the transmission of dengue and yellow fever by the mosquito. Also required for the response to the insect repellent IR3535; or to N,N-Diethyl-meta-toluamide (DEET), the most widely used insect repellent worldwide. This Aedes aegypti (Yellowfever mosquito) protein is Odorant receptor coreceptor (SGPRor7).